A 645-amino-acid polypeptide reads, in one-letter code: Rab11 family-interacting protein 1 (645 aa).

Residues 1 to 128 (MSLAASAGRG…DQGRRKKQWY (128 aa)) form the C2 domain. The segment covering 171-187 (PFGKLKDKIKGKNKDSA) has biased composition (basic and acidic residues). The tract at residues 171 to 215 (PFGKLKDKIKGKNKDSASDTASAIVPSVTPSVDSDDESFSKDKKK) is disordered. Phosphoserine is present on residues Ser-186, Ser-204, Ser-208, and Ser-236. The disordered stretch occupies residues 259–296 (WDDDAHEDESSSASDVMSHKRTSSTDQQPNQSNFSLPK). Residues 282 to 293 (STDQQPNQSNFS) show a composition bias toward polar residues. Ser-301, Ser-316, Ser-340, Ser-342, Ser-344, Ser-346, Ser-357, Ser-358, and Ser-383 each carry phosphoserine. The disordered stretch occupies residues 330–545 (PEARSEIRES…PRPHPVKPMN (216 aa)). Composition is skewed to basic and acidic residues over residues 378–391 (SDRR…KDSM) and 418–432 (AARE…ESKK). The residue at position 434 (Ser-434) is a Phosphoserine. Residues 459–487 (SEKEKERKGALVEAQLREEDLMRRPEKDA) show a composition bias toward basic and acidic residues. The 63-residue stretch at 573-635 (KKYQPSDPAF…EETPNILRVP (63 aa)) folds into the FIP-RBD domain. The interval 581–645 (AFAYAQLTHD…AQMGKKAGKM (65 aa)) is necessary for interaction with RAB4A and RAB11A, subcellular location and endosomal recycling.

Homooligomer. Interacts with RAB11A, RAB11B, RAB25, RAB4A and RAB14.

It is found in the recycling endosome. It localises to the cytoplasmic vesicle. In terms of biological role, a Rab11 effector protein involved in the endosomal recycling process. Also involved in controlling membrane trafficking along the phagocytic pathway and in phagocytosis. Interaction with RAB14 may function in the process of neurite formation. The sequence is that of Rab11 family-interacting protein 1 (Rab11fip1) from Mus musculus (Mouse).